A 176-amino-acid polypeptide reads, in one-letter code: Odorant-binding protein 2a (176 aa).

Positions 1–19 (MKSLLLTILLLGLVAVLKA) are cleaved as a signal peptide. N-linked (GlcNAc...) asparagine glycans are attached at residues N42 and N124. C79 and C172 are joined by a disulfide.

Belongs to the calycin superfamily. Lipocalin family. In terms of tissue distribution, expressed in the liver (at protein level). Expressed in epididymis.

The protein resides in the secreted. Involved in the regulation of systematic glucose homeostasis and insulin sensitivity. Involved in the regulation of liver lipid levels by positive regulation of hepatic lipogenesis and negative regulation of fatty acid beta-oxidation; via downstream transcriptional regulation of CPT1A and hepatic lipogenic program gene expression. May regulate hepatic lipogenesis and fatty acid beta-oxidation in an autocrine or paracrine manner. The polypeptide is Odorant-binding protein 2a (Obp2a) (Mus musculus (Mouse)).